The following is a 647-amino-acid chain: Acetyl-coenzyme A synthetase (647 aa).

Residues 190-193, threonine 310, and asparagine 334 each bind CoA; that span reads RGGK. ATP-binding positions include 386-388, 410-415, aspartate 499, and arginine 514; these read GEP and DTWWQT. Serine 522 is a binding site for CoA. Arginine 525 contacts ATP. Mg(2+) is bound by residues valine 536, histidine 538, and valine 541. Arginine 583 contributes to the CoA binding site. Lysine 608 is modified (N6-acetyllysine).

This sequence belongs to the ATP-dependent AMP-binding enzyme family. It depends on Mg(2+) as a cofactor. In terms of processing, acetylated. Deacetylation by the SIR2-homolog deacetylase activates the enzyme.

The catalysed reaction is acetate + ATP + CoA = acetyl-CoA + AMP + diphosphate. Functionally, catalyzes the conversion of acetate into acetyl-CoA (AcCoA), an essential intermediate at the junction of anabolic and catabolic pathways. AcsA undergoes a two-step reaction. In the first half reaction, AcsA combines acetate with ATP to form acetyl-adenylate (AcAMP) intermediate. In the second half reaction, it can then transfer the acetyl group from AcAMP to the sulfhydryl group of CoA, forming the product AcCoA. This Xanthomonas axonopodis pv. citri (strain 306) protein is Acetyl-coenzyme A synthetase.